The primary structure comprises 517 residues: MLSEDLATSFLPPSYMWSLTLFALCLSAILMFPFLTGRRLSITHRKQGWRISLVNTRGDFQNEAEQLIRMGFSKSPSAFRMSTDGGPRLILSQKHLDAMSDDDHFNVAEAVKRDYLLDLFGFETAFHGTLHSEIVAPAVTAMTKKLVPLVPLMSKEAALGLEKEWTDNSEYHDVPLQPTLGGVVARLASLAFVGPDLCRNPTWLEITVSYTINRVIAVYVLRIFPSFLQPFVHWVLPPCRKLRAQIQQARELILPALKHERQLQSAGNAKRDPNRPFSSLAWNDEYAAGRLYDPTVAQLRMIFVSIHTTIDMAVKVLVRLCEHPELIQPLREEIVTVCGENGLTHSSLERLLLMDSLMKETQRLEPASLATIARYTHRKTTLSDGTIVPKGTQVVLPNMFMWNNESIYPDSNTFDAYRFLRMRDDPETAKLASFTRSSHIHTAFGHGKHTCPGRFFASDTIKIILCHILLKYDLQLCDGEAPAKKRYGFAMYRDPDARIRVRRRGVEGVSEGILAGF.

A helical membrane pass occupies residues 15–35; that stretch reads YMWSLTLFALCLSAILMFPFL. Asn-404 carries N-linked (GlcNAc...) asparagine glycosylation. Cys-451 is a heme binding site.

The protein belongs to the cytochrome P450 family. It depends on heme as a cofactor.

It is found in the membrane. The enzyme catalyses 3-hydroxypentacecilide A + NADPH + O2 + H(+) = chrodrimanin F + NADP(+) + H2O. The catalysed reaction is chrodrimanin C + NADPH + O2 + H(+) = chrodrimanin H + NADP(+) + H2O. It carries out the reaction verruculide A + NADPH + O2 + H(+) = chrodrimanin E + NADP(+) + H2O. It catalyses the reaction chrodrimanin T + NADPH + O2 + H(+) = chrodrimanin A + NADP(+) + H2O. The protein operates within secondary metabolite biosynthesis; terpenoid biosynthesis. Its function is as follows. Cytochrome P450 monooxygenase; part of the gene cluster that mediates the biosynthesis of chrodrimanin B, a meroterpenoid that acts as a potent blocker of insect GABA-gated chloride channels. The first step of the pathway is the biosynthesis of 6-hydroxymellein by the polyketide synthase cdmE. The prenyltransferase cdmH acts as a 6-hydroxymellein 5-farnesyltransferase and produces the hydrophobic metabolite verruculide C. The FAD-dependent monooxygenase cdmI further converts verruculide C into verruculide B. The terpene cyclase cdmG then produced the pentacyclic molecule 3-hydroxypentacecilide A, the backbone structure of chrodrimanin B, via folding the farnesyl moiety of the substrate into the chair-boat conformation. The short-chain dehydrogenase/reductase cdmF functions as the 3-OH dehydrogenase that oxidizes the C-3 hydroxyl group of 3-hydroxypentacecilide A and produces chrodrimanin C, the dehydrogenated product of 3-hydroxypentacecilide A. The cytochrome P450 monooxygenase cdmJ then accepts both 3-hydroxypentacecilide A and chrodrimanin C and functions as a C-7-beta-hydroxylase to produce respectively chrodrimanin H and chrodrimanin F. The dioxygenase cdmA accepts chrodrimanin H to afford chrodrimanin E, which is further transformed to chrodrimanin A by the dioxygenase cdmD. CdmA can also accept chrodrimanin C as substrate to convert it into verruculide A, which is further converted into chrodrimanin T by cdmD. The last step of the biosynthesis is proposed to be performed by the acetyltransferase cdmC which acetylates chrodrimanin A to yield chrodrimanin B. The pathway may also lead to the production of additional shunt products, including chrodrimanins T and U. The sequence is that of Cytochrome P450 monooxygenase cdmJ from Talaromyces verruculosus (Penicillium verruculosum).